Reading from the N-terminus, the 713-residue chain is UvrABC system protein B (713 aa).

The Helicase ATP-binding domain occupies 35 to 421 (RRIRAGEKDV…GDGFVEQIIR (387 aa)). ATP is bound at residue 48-55 (GATGTGKS). The short motif at 101–124 (YYDYYQPEAYVPQSDTYIEKDSSI) is the Beta-hairpin element. The 167-residue stretch at 438 to 604 (QIDDLVHEIR…PLRKKINDIV (167 aa)) folds into the Helicase C-terminal domain. A disordered region spans residues 624-663 (QAKDGKGAKAPVPSLGGKAAAKGAKSAKGKAKETVPTDRP). The segment covering 639 to 649 (GGKAAAKGAKS) has biased composition (low complexity). Residues 653–663 (KAKETVPTDRP) show a composition bias toward basic and acidic residues. One can recognise a UVR domain in the interval 668-703 (AEEIEELTNRMRAAAADLQFEIAARLRDEVSEMKKE).

Belongs to the UvrB family. In terms of assembly, forms a heterotetramer with UvrA during the search for lesions. Interacts with UvrC in an incision complex.

The protein resides in the cytoplasm. Functionally, the UvrABC repair system catalyzes the recognition and processing of DNA lesions. A damage recognition complex composed of 2 UvrA and 2 UvrB subunits scans DNA for abnormalities. Upon binding of the UvrA(2)B(2) complex to a putative damaged site, the DNA wraps around one UvrB monomer. DNA wrap is dependent on ATP binding by UvrB and probably causes local melting of the DNA helix, facilitating insertion of UvrB beta-hairpin between the DNA strands. Then UvrB probes one DNA strand for the presence of a lesion. If a lesion is found the UvrA subunits dissociate and the UvrB-DNA preincision complex is formed. This complex is subsequently bound by UvrC and the second UvrB is released. If no lesion is found, the DNA wraps around the other UvrB subunit that will check the other stand for damage. This Streptomyces avermitilis (strain ATCC 31267 / DSM 46492 / JCM 5070 / NBRC 14893 / NCIMB 12804 / NRRL 8165 / MA-4680) protein is UvrABC system protein B.